The sequence spans 102 residues: Small ribosomal subunit protein uS10 (102 aa).

The protein belongs to the universal ribosomal protein uS10 family. Part of the 30S ribosomal subunit.

In terms of biological role, involved in the binding of tRNA to the ribosomes. In Dehalococcoides mccartyi (strain ATCC BAA-2100 / JCM 16839 / KCTC 5957 / BAV1), this protein is Small ribosomal subunit protein uS10.